The following is a 1667-amino-acid chain: Androglobin (1667 aa).

A compositionally biased stretch (basic residues) spans 1–11 (MASKQTKKKEV). 3 disordered regions span residues 1–45 (MASK…KGKF), 347–387 (SLTT…KFSL), and 540–566 (GSDL…ITKA). One can recognise a Calpain catalytic domain in the interval 70-411 (KDKTGKSPVF…SLSDCSSAIQ (342 aa)). Residues 353-384 (APEKSDKVPKEKADARDIGKKRSKDGEKEKFK) show a composition bias toward basic and acidic residues. Residues 554-566 (THSQTDLSQITKA) show a composition bias toward polar residues. The Globin; C-terminal part domain maps to 763 to 890 (HICSMVSFVI…EEVSLVEWLD (128 aa)). The heme b site is built by Gln-792 and His-824. The region spanning 906 to 935 (EVAAAIKIQAMWRGTYVRLLMKARIPDTKE) is the IQ domain. In terms of domain architecture, Globin; N-terminal part spans 936–968 (NISVADTLQKVWAVLEMNLEQYAVSLLRLMFKS). Disordered regions lie at residues 1297-1355 (INLG…QQED) and 1420-1522 (TSDA…RSPT). Positions 1301–1315 (SPDSHTISEGQKSSV) are enriched in polar residues. Basic and acidic residues-rich tracts occupy residues 1325–1340 (EKSS…KQAP) and 1433–1450 (TKPK…KEPN). Residues 1451–1468 (SKNSAGSESKEMTQTGSG) are compositionally biased toward polar residues. Residues 1487 to 1498 (STSSESGGVSSP) are compositionally biased toward low complexity. Positions 1499 to 1511 (GKEEREQSTRKEN) are enriched in basic and acidic residues. Polar residues predominate over residues 1512-1522 (IQTGPRTRSPT). Residues 1588 to 1629 (QEERLKLKDEVLDMYKEMQDSLDEARQKIFDIREEYRNKLLE) are a coiled coil. The tract at residues 1646 to 1667 (KLETEKMTPAPDTQKKKKGKKK) is disordered.

In the central section; belongs to the globin family. The protein in the N-terminal section; belongs to the peptidase C2 family. Interacts with septin SEPT10; contributes to in vitro proteolytic cleavage of SEPT10 in a calmodulin-dependent manner. Interacts with CFAP69. Interacts with SPEF2. May interact with calmodulin.

The protein resides in the cell projection. The protein localises to the cilium. Its subcellular location is the flagellum. In terms of biological role, probable chimeric globin with a bis-histidyl six-coordinate heme-iron atom through which it could bind dioxygen, carbon monoxide and nitric oxide. Required for sperm flagellum formation and maturation of elongating spermatids, thus playing an essential role in male fertility. This chain is Androglobin, found in Homo sapiens (Human).